Reading from the N-terminus, the 183-residue chain is Adenine phosphoribosyltransferase (183 aa).

Belongs to the purine/pyrimidine phosphoribosyltransferase family. In terms of assembly, homodimer.

The protein localises to the cytoplasm. It carries out the reaction AMP + diphosphate = 5-phospho-alpha-D-ribose 1-diphosphate + adenine. The protein operates within purine metabolism; AMP biosynthesis via salvage pathway; AMP from adenine: step 1/1. In terms of biological role, catalyzes a salvage reaction resulting in the formation of AMP, that is energically less costly than de novo synthesis. This Proteus mirabilis (strain HI4320) protein is Adenine phosphoribosyltransferase.